Reading from the N-terminus, the 353-residue chain is MTATLERRESASLWGRFCDWVTSTENRLYIGWFGVLMIPTLLTATAVFIIAFIAAPPVDIDGIREPVSGSLLYGNNIISGAIIPTSAAIGLHFYPIWEAASVDEWLYNGGPYELIVLHFLLGVACYMGREWELSFRLGMRPWIAVAYSAPVAAAAAVFLIYPIGQGSFSDGMPLGISGTFNFMIVFQAEHNILMHPFHMLGVAGVFGGSLFSAMHGSLVTSSLIRETTENESANAGYKFGQEEETYNIVAAHGYFGRLIFQYASFNNSRSLHFFLAAWPVVGIWFTALGISTMAFNLNGFNFNQSVVDSQGRVINTWADIINRANLGMEVMHERNAHNFPLDLASVEAPSVNG.

Threonine 2 is modified (N-acetylthreonine). Threonine 2 carries the post-translational modification Phosphothreonine. Transmembrane regions (helical) follow at residues 29–46 (YIGWFGVLMIPTLLTATA), 118–133 (HFLLGVACYMGREWEL), and 142–156 (WIAVAYSAPVAAAAA). Histidine 118 lines the chlorophyll a pocket. Residue tyrosine 126 coordinates pheophytin a. Aspartate 170 and glutamate 189 together coordinate [CaMn4O5] cluster. A helical membrane pass occupies residues 197–218 (FHMLGVAGVFGGSLFSAMHGSL). Histidine 198 is a chlorophyll a binding site. Residues histidine 215 and 264-265 (SF) each bind a quinone. A Fe cation-binding site is contributed by histidine 215. Residue histidine 272 participates in Fe cation binding. The helical transmembrane segment at 274–288 (FLAAWPVVGIWFTAL) threads the bilayer. Histidine 332, glutamate 333, aspartate 342, and alanine 344 together coordinate [CaMn4O5] cluster. Positions 345 to 353 (SVEAPSVNG) are excised as a propeptide.

This sequence belongs to the reaction center PufL/M/PsbA/D family. PSII is composed of 1 copy each of membrane proteins PsbA, PsbB, PsbC, PsbD, PsbE, PsbF, PsbH, PsbI, PsbJ, PsbK, PsbL, PsbM, PsbT, PsbX, PsbY, PsbZ, Psb30/Ycf12, at least 3 peripheral proteins of the oxygen-evolving complex and a large number of cofactors. It forms dimeric complexes. The D1/D2 heterodimer binds P680, chlorophylls that are the primary electron donor of PSII, and subsequent electron acceptors. It shares a non-heme iron and each subunit binds pheophytin, quinone, additional chlorophylls, carotenoids and lipids. D1 provides most of the ligands for the Mn4-Ca-O5 cluster of the oxygen-evolving complex (OEC). There is also a Cl(-1) ion associated with D1 and D2, which is required for oxygen evolution. The PSII complex binds additional chlorophylls, carotenoids and specific lipids. is required as a cofactor. In terms of processing, tyr-161 forms a radical intermediate that is referred to as redox-active TyrZ, YZ or Y-Z. C-terminally processed by CTPA; processing is essential to allow assembly of the oxygen-evolving complex and thus photosynthetic growth.

Its subcellular location is the plastid. The protein resides in the chloroplast thylakoid membrane. The catalysed reaction is 2 a plastoquinone + 4 hnu + 2 H2O = 2 a plastoquinol + O2. Functionally, photosystem II (PSII) is a light-driven water:plastoquinone oxidoreductase that uses light energy to abstract electrons from H(2)O, generating O(2) and a proton gradient subsequently used for ATP formation. It consists of a core antenna complex that captures photons, and an electron transfer chain that converts photonic excitation into a charge separation. The D1/D2 (PsbA/PsbD) reaction center heterodimer binds P680, the primary electron donor of PSII as well as several subsequent electron acceptors. This Huperzia lucidula (Shining clubmoss) protein is Photosystem II protein D1.